Reading from the N-terminus, the 167-residue chain is uncharacterized protein (167 aa).

It localises to the plastid. The protein localises to the chloroplast. This is an uncharacterized protein from Mesostigma viride (Green alga).